Consider the following 763-residue polypeptide: Phosphoglycerol transferase I (763 aa).

A run of 4 helical transmembrane segments spans residues 4–19 (LLSFALFLASVLIYAW), 26–48 (WWFAATLTVLGLFVVLNITLFAS), 76–98 (YILPGIGIVLGLAAVFGALGWIL), and 105–127 (PHHFGYSLLALLLALGSVDASPA).

The protein belongs to the OpgB family.

The protein localises to the cell inner membrane. The catalysed reaction is a phosphatidylglycerol + a membrane-derived-oligosaccharide D-glucose = a 1,2-diacyl-sn-glycerol + a membrane-derived-oligosaccharide 6-(glycerophospho)-D-glucose.. It participates in glycan metabolism; osmoregulated periplasmic glucan (OPG) biosynthesis. Functionally, transfers a phosphoglycerol residue from phosphatidylglycerol to the membrane-bound nascent glucan backbones. This is Phosphoglycerol transferase I from Escherichia coli O6:H1 (strain CFT073 / ATCC 700928 / UPEC).